A 162-amino-acid chain; its full sequence is Deoxyuridine 5'-triphosphate nucleotidohydrolase (162 aa).

S11 bears the Phosphoserine mark. DUTP-binding positions include 83–85 (RSG), 97–103 (GVIDEDY), G108, R151, and 156–157 (FG).

This sequence belongs to the dUTPase family. Homotrimer. Mg(2+) is required as a cofactor. Post-translationally, phosphorylated in vivo on Ser-11, a reaction that can be catalyzed in vitro by CDC2.

It localises to the nucleus. The catalysed reaction is dUTP + H2O = dUMP + diphosphate + H(+). It functions in the pathway pyrimidine metabolism; dUMP biosynthesis; dUMP from dCTP (dUTP route): step 2/2. Its function is as follows. Catalyzes the cleavage of 2'-deoxyuridine 5'-triphosphate (dUTP) into 2'-deoxyuridine 5'-monophosphate (dUMP) and inorganic pyrophosphate and through its action efficiently prevents uracil misincorporation into DNA and at the same time provides dUMP, the substrate for de novo thymidylate biosynthesis. Inhibits peroxisome proliferator-activated receptor (PPAR) activity by binding of its N-terminal to PPAR, preventing the latter's dimerization with retinoid X receptor. Essential for embryonic development. In Mus musculus (Mouse), this protein is Deoxyuridine 5'-triphosphate nucleotidohydrolase (Dut).